The following is a 265-amino-acid chain: 2-amino-3,7-dideoxy-D-threo-hept-6-ulosonate synthase (265 aa).

Residue Asp25 is the Proton acceptor of the active site. 1-deoxy-D-threo-hexo-2,5-diulose 6-phosphate-binding positions include 25–29 (DHGIT) and 144–146 (YAR). Catalysis depends on Tyr144, which acts as the Proton donor. The active-site Schiff-base intermediate with substrate is Lys174. Residues 199-200 (GG) and 226-227 (GR) each bind 1-deoxy-D-threo-hexo-2,5-diulose 6-phosphate.

This sequence belongs to the DeoC/FbaB aldolase family. ADHS subfamily. Homodecamer.

The enzyme catalyses 1-deoxy-D-threo-hexo-2,5-diulose 6-phosphate + L-aspartate 4-semialdehyde = 2,3-dioxopropyl phosphate + 2-amino-2,3,7-trideoxy-D-lyxo-hept-6-ulosonate. Its function is as follows. Catalyzes a transaldol reaction between 6-deoxy-5-ketofructose 1-phosphate (DKFP) and L-aspartate semialdehyde (ASA) with an elimination of hydroxypyruvaldehyde phosphate to yield 2-amino-3,7-dideoxy-D-threo-hept-6-ulosonate (ADH). Plays a key role in an alternative pathway of the biosynthesis of 3-dehydroquinate (DHQ), which is involved in the canonical pathway for the biosynthesis of aromatic amino acids. This Halobacterium salinarum (strain ATCC 700922 / JCM 11081 / NRC-1) (Halobacterium halobium) protein is 2-amino-3,7-dideoxy-D-threo-hept-6-ulosonate synthase.